We begin with the raw amino-acid sequence, 321 residues long: Phospho-N-acetylmuramoyl-pentapeptide-transferase (321 aa).

The next 10 membrane-spanning stretches (helical) occupy residues 6–26, 53–73, 77–97, 121–141, 144–164, 175–195, 200–220, 226–246, 251–271, and 301–321; these read MLIPMVSAFAITIMFMPLFIG, TMGGLIFIAAIIVSAIWVGIW, LTLSVWVSLFILVLYGLLGFY, ILGAIIFLIAYFHEGFDHTLW, IIGNVSAAWFYVLFVIVWLVG, LDGLVAGQTTISFGTYAIIAA, TDVLIVCLVTIGAMLGFLMFN, IFMGDLGSLALGGMLAVVAIL, WSLLLIGIIYVTETASVILQV, and IDLTFWLVGLIGSGIYLAFFL.

It belongs to the glycosyltransferase 4 family. MraY subfamily. It depends on Mg(2+) as a cofactor.

Its subcellular location is the cell membrane. The catalysed reaction is UDP-N-acetyl-alpha-D-muramoyl-L-alanyl-gamma-D-glutamyl-L-lysyl-D-alanyl-D-alanine + di-trans,octa-cis-undecaprenyl phosphate = Mur2Ac(oyl-L-Ala-gamma-D-Glu-L-Lys-D-Ala-D-Ala)-di-trans,octa-cis-undecaprenyl diphosphate + UMP. It functions in the pathway cell wall biogenesis; peptidoglycan biosynthesis. Its function is as follows. Catalyzes the initial step of the lipid cycle reactions in the biosynthesis of the cell wall peptidoglycan: transfers peptidoglycan precursor phospho-MurNAc-pentapeptide from UDP-MurNAc-pentapeptide onto the lipid carrier undecaprenyl phosphate, yielding undecaprenyl-pyrophosphoryl-MurNAc-pentapeptide, known as lipid I. This Lacticaseibacillus paracasei (strain ATCC 334 / BCRC 17002 / CCUG 31169 / CIP 107868 / KCTC 3260 / NRRL B-441) (Lactobacillus paracasei) protein is Phospho-N-acetylmuramoyl-pentapeptide-transferase.